The chain runs to 161 residues: DNA endonuclease I-CvuI (161 aa).

This sequence belongs to the LAGLIDADG endonuclease family.

Its subcellular location is the plastid. It localises to the chloroplast. In terms of biological role, probable endonuclease involved in intron homing. This chain is DNA endonuclease I-CvuI, found in Chlorella vulgaris (Green alga).